The chain runs to 258 residues: L-aminoadipate-semialdehyde dehydrogenase-phosphopantetheinyl transferase (258 aa).

Belongs to the P-Pant transferase superfamily. AcpS family.

It carries out the reaction apo-[ACP] + CoA = holo-[ACP] + adenosine 3',5'-bisphosphate + H(+). Its function is as follows. Catalyzes the transfer of a 4'-phosphopantetheine moiety from coenzyme A to a serine residue of acceptor proteins, such as alpha-aminoadipate reductase. Necessary for alpha-aminoadipate reductase activity. The chain is L-aminoadipate-semialdehyde dehydrogenase-phosphopantetheinyl transferase (LYS5) from Candida glabrata (strain ATCC 2001 / BCRC 20586 / JCM 3761 / NBRC 0622 / NRRL Y-65 / CBS 138) (Yeast).